Consider the following 436-residue polypeptide: RNA polymerase sigma-54 factor (436 aa).

A DNA-binding region (H-T-H motif) is located at residues 324–343 (TLREVADCLSLHESTVSRAI). The short motif at 413 to 421 (SRRTVAKYR) is the RPON box element.

It belongs to the sigma-54 factor family. Interacts transiently with the RNAP core.

In terms of biological role, sigma factors are initiation factors that promote the attachment of RNA polymerase (RNAP) to specific initiation sites and are then released. This sigma factor is responsible for the expression of the levanase operon. The open complex (sigma-54 and core RNA polymerase) serves as the receptor for receipt of the melting signal from the remotely bound activator protein LevR for the expression of the levanase operon. Associates with the RNAP core only in stationary phase cells. The protein is RNA polymerase sigma-54 factor (sigL) of Bacillus subtilis (strain 168).